A 249-amino-acid polypeptide reads, in one-letter code: MELPLPGLWLKRLWVLFQVALHVAMGKVLMTLFPGRVKQDILAMSQKTGMAKNPHFSHENWIPTFFSAQYFWFVLKVRWQRLEDKTEEGGLAPNCPVVSLSGQRCHIWDFMQGNRPLVLNFGSCTUPSFIFKFDQFKRLIEDFSSIADFLIIYIEEAHASDGWAFKNNVDIKNHQNLQDRLRAAHLLLDRSPQCPVVVDTMKNQSSRLYAALPERLYVLQAGRILYKGKPGPWNYHPEEVRAVLEKLHS.

The Extracellular portion of the chain corresponds to 1–12; the sequence is MELPLPGLWLKR. A helical; Signal-anchor for type III membrane protein membrane pass occupies residues 13–33; it reads LWVLFQVALHVAMGKVLMTLF. Residues 34 to 249 lie on the Cytoplasmic side of the membrane; that stretch reads PGRVKQDILA…VRAVLEKLHS (216 aa). U126 is a catalytic residue. U126 is a non-standard amino acid (selenocysteine).

This sequence belongs to the iodothyronine deiodinase family. In terms of assembly, predominantly monomer. Can form homodimers but homodimerization is not essential for enzyme activity.

It localises to the cell membrane. It is found in the endoplasmic reticulum membrane. Its subcellular location is the basolateral cell membrane. It carries out the reaction 3,3',5-triiodo-L-thyronine + iodide + A + H(+) = L-thyroxine + AH2. The enzyme catalyses 3,3',5'-triiodo-L-thyronine + iodide + A + H(+) = L-thyroxine + AH2. The catalysed reaction is 3,3'-diiodo-L-thyronine + iodide + A + H(+) = 3,3',5'-triiodo-L-thyronine + AH2. It catalyses the reaction 3,3'-diiodo-L-thyronine + iodide + A + H(+) = 3,3',5-triiodo-L-thyronine + AH2. It carries out the reaction 3'-iodo-L-thyronine + iodide + A + H(+) = 3',5'-diiodo-L-thyronine + AH2. The enzyme catalyses 3-iodo-L-thyronine + iodide + A + H(+) = 3,5-diiodo-L-thyronine + AH2. The catalysed reaction is 3-iodo-L-thyronine + iodide + A + H(+) = 3,3'-diiodo-L-thyronine + AH2. It catalyses the reaction 3,3'-diiodothyronamine + iodide + A + H(+) = 3,3',5'-triiodothyronamine + AH2. It carries out the reaction 3'-iodothyronamine + iodide + A + H(+) = 3',5'-diiodothyronamine + AH2. The enzyme catalyses 3-iodothyronamine + iodide + A + H(+) = 3,3'-diiodothyronamine + AH2. The catalysed reaction is 3,3'-diiodothyronamine + iodide + A + H(+) = 3,3',5-triiodothyronamine + AH2. It catalyses the reaction 3-iodothyronamine + iodide + A + H(+) = 3,5-diiodothyronamine + AH2. It carries out the reaction 3,3'-diiodo-L-thyronine sulfate + iodide + A + H(+) = 3,3',5'-triiodo-L-thyronine sulfate + AH2. The enzyme catalyses 3,3',5'-triiodo-L-thyronine sulfate + iodide + A + H(+) = L-thyroxine sulfate + AH2. The catalysed reaction is 3,3'-diiodo-L-thyronine sulfate + iodide + A + H(+) = 3,3',5-triiodo-L-thyronine sulfate + AH2. Its function is as follows. Plays a crucial role in the metabolism of thyroid hormones (TH) and has specific roles in TH activation and inactivation by deiodination. Catalyzes the deiodination of L-thyroxine (T4) to 3,5,3'-triiodothyronine (T3) and 3,3',5'-triiodothyronine (rT3) to 3,3'-diiodothyronine (3,3'-T2) via outer-ring deiodination (ORD). Catalyzes the deiodination of T4 to rT3, T3 to 3,3'-T2, 3,5-diiodothyronine (3,5-T2) to 3-monoiodothyronine (3-T1) and 3,3'-T2 to 3-T1 via inner-ring deiodination (IRD). Catalyzes the deiodination of 3',5'-diiodothyronine (3',5'-T2) to 3'-monoiodothyronine (3'-T1) via ORD. Catalyzes the phenolic ring deiodinations of 3,3',5'-triiodothyronamine, 3',5'-diiodothyronamine and 3,3'-diiodothyronamine as well as tyrosyl ring deiodinations of 3,5,3'-triiodothyronamine and 3,5-diiodothyronamine. Catalyzes the deiodination of L-thyroxine sulfate and 3,3',5-triiodo-L-thyronine sulfate via IRD and of 3,3',5'-triiodo-L-thyronine sulfate via ORD. In Sus scrofa (Pig), this protein is Type I iodothyronine deiodinase (DIO1).